A 163-amino-acid polypeptide reads, in one-letter code: Zinc finger A20 and AN1 domain-containing stress-associated protein 3 (163 aa).

The A20-type zinc-finger motif lies at leucine 7–glutamine 41. Positions 13, 17, 29, and 32 each coordinate Zn(2+). The disordered stretch occupies residues valine 57–proline 101. The segment covering aspartate 74–alanine 89 has biased composition (basic and acidic residues). The AN1-type zinc finger occupies proline 98 to glycine 144. Zn(2+) contacts are provided by cysteine 104, cysteine 107, cysteine 118, cysteine 120, cysteine 125, histidine 128, histidine 134, and cysteine 136.

May be involved in environmental stress response. In Arabidopsis thaliana (Mouse-ear cress), this protein is Zinc finger A20 and AN1 domain-containing stress-associated protein 3 (SAP3).